Reading from the N-terminus, the 370-residue chain is Glutamine synthetase (370 aa).

The region spanning 23-102 (VLAEYVWIDA…VLTECWNNDG (80 aa)) is the GS beta-grasp domain. Residues 40–69 (CKTLDKKPSSVEDLPEWNFDGSSTGQAPGH) form a disordered region. Residues 109–370 (HRHESAKLMK…FKEYARESSD (262 aa)) enclose the GS catalytic domain.

Belongs to the glutamine synthetase family. As to quaternary structure, homooctamer.

The protein localises to the cytoplasm. It catalyses the reaction L-glutamate + NH4(+) + ATP = L-glutamine + ADP + phosphate + H(+). The chain is Glutamine synthetase (GLN1) from Debaryomyces hansenii (strain ATCC 36239 / CBS 767 / BCRC 21394 / JCM 1990 / NBRC 0083 / IGC 2968) (Yeast).